Here is a 602-residue protein sequence, read N- to C-terminus: Threonine--tRNA ligase (602 aa).

The catalytic stretch occupies residues 208 to 499; it reads DHRKLGTELK…LTEHCAGEFP (292 aa). Zn(2+) contacts are provided by Cys-300, His-351, and His-476.

The protein belongs to the class-II aminoacyl-tRNA synthetase family. As to quaternary structure, homodimer. It depends on Zn(2+) as a cofactor.

The protein localises to the cytoplasm. It carries out the reaction tRNA(Thr) + L-threonine + ATP = L-threonyl-tRNA(Thr) + AMP + diphosphate + H(+). In terms of biological role, catalyzes the attachment of threonine to tRNA(Thr) in a two-step reaction: L-threonine is first activated by ATP to form Thr-AMP and then transferred to the acceptor end of tRNA(Thr). Also edits incorrectly charged L-seryl-tRNA(Thr). The sequence is that of Threonine--tRNA ligase from Campylobacter jejuni subsp. jejuni serotype O:6 (strain 81116 / NCTC 11828).